The following is a 427-amino-acid chain: Enolase (427 aa).

Gln163 is a binding site for (2R)-2-phosphoglycerate. Glu205 functions as the Proton donor in the catalytic mechanism. Mg(2+) is bound by residues Asp242, Glu283, and Asp310. 4 residues coordinate (2R)-2-phosphoglycerate: Lys335, Arg364, Ser365, and Lys386. Residue Lys335 is the Proton acceptor of the active site.

The protein belongs to the enolase family. Mg(2+) is required as a cofactor.

The protein resides in the cytoplasm. It is found in the secreted. The protein localises to the cell surface. It catalyses the reaction (2R)-2-phosphoglycerate = phosphoenolpyruvate + H2O. It participates in carbohydrate degradation; glycolysis; pyruvate from D-glyceraldehyde 3-phosphate: step 4/5. Catalyzes the reversible conversion of 2-phosphoglycerate (2-PG) into phosphoenolpyruvate (PEP). It is essential for the degradation of carbohydrates via glycolysis. This Salinispora arenicola (strain CNS-205) protein is Enolase.